Consider the following 633-residue polypeptide: MINIHFSNNLCKQFHRGIKGHDIVNDLFPKLKNETIAAKVNGELYDLSREIIENCTFEVITINSEEGLEIIRHDTAHIMAQAVKEMFPDVQITIGPTIKDGFYYDFATNHNFSSDDLEIIEKKMIEIINKNESFIREVWSREEAIKFFSSIGEDYKVKIISNIPSNENITVYKQGSFTDLCRGPHAPSTKTSRAFKLTKVSGSYWQGNSNNERLQRIYGTAWRNEEELKLYLNNLIEAEKRDHRKIGRELELFHIQNEACGQIFWHTKGWTIYRIIENYIRKKLENNGYIEVKTPILLNKELWEKSGHWDKFRENMFLSEAEDKTLAIKPMNCPCHIQIFNSKIRSYRDLPIRMAEFGTCHRYEASGALHGLMRVRGFTQDDAHIFCTESQITSEALKFCNLLIEIYKDFGFTDILVKFSDRPKNRAGSDEIWDKAEAALKKSVEVANLSYVLNPGDGAFYGPKLEFTLKDAIGREWQCGTLQMDFVLPERLGAYYIGSDGKKHHPVMLHRAILGTFERFIGILIEHHSGKFPMWLAPIQLSILTISEDSINYANSLKIKAEEHNIRVELDTTNEKINYKIRNHIHKKVPVFWIVGKKEVEENSVSIRYLESNKQHVMPIDKALKTLLTCASI.

In terms of domain architecture, TGS spans 1 to 61 (MINIHFSNNL…IENCTFEVIT (61 aa)). Residues 242 to 533 (DHRKIGRELE…LIEHHSGKFP (292 aa)) form a catalytic region. Residues Cys-333, His-384, and His-510 each contribute to the Zn(2+) site.

The protein belongs to the class-II aminoacyl-tRNA synthetase family. As to quaternary structure, homodimer. Requires Zn(2+) as cofactor.

It is found in the cytoplasm. The enzyme catalyses tRNA(Thr) + L-threonine + ATP = L-threonyl-tRNA(Thr) + AMP + diphosphate + H(+). Functionally, catalyzes the attachment of threonine to tRNA(Thr) in a two-step reaction: L-threonine is first activated by ATP to form Thr-AMP and then transferred to the acceptor end of tRNA(Thr). Also edits incorrectly charged L-seryl-tRNA(Thr). This chain is Threonine--tRNA ligase, found in Ehrlichia chaffeensis (strain ATCC CRL-10679 / Arkansas).